Consider the following 323-residue polypeptide: Beta-ketoacyl-[acyl-carrier-protein] synthase III (323 aa).

Catalysis depends on residues Cys-113 and His-250. The tract at residues 251–255 (QANKR) is ACP-binding. Residue Asn-280 is part of the active site.

The protein belongs to the thiolase-like superfamily. FabH family. In terms of assembly, homodimer.

The protein localises to the cytoplasm. The catalysed reaction is malonyl-[ACP] + acetyl-CoA + H(+) = 3-oxobutanoyl-[ACP] + CO2 + CoA. It functions in the pathway lipid metabolism; fatty acid biosynthesis. In terms of biological role, catalyzes the condensation reaction of fatty acid synthesis by the addition to an acyl acceptor of two carbons from malonyl-ACP. Catalyzes the first condensation reaction which initiates fatty acid synthesis and may therefore play a role in governing the total rate of fatty acid production. Possesses both acetoacetyl-ACP synthase and acetyl transacylase activities. Its substrate specificity determines the biosynthesis of branched-chain and/or straight-chain of fatty acids. This chain is Beta-ketoacyl-[acyl-carrier-protein] synthase III, found in Brucella canis (strain ATCC 23365 / NCTC 10854 / RM-666).